We begin with the raw amino-acid sequence, 505 residues long: Flagellin (505 aa).

Belongs to the bacterial flagellin family.

It is found in the secreted. The protein localises to the bacterial flagellum. Functionally, flagellin is the subunit protein which polymerizes to form the filaments of bacterial flagella. This Salmonella rostock protein is Flagellin (fliC).